The sequence spans 332 residues: ADP-L-glycero-D-manno-heptose-6-epimerase (332 aa).

Residues 11–12 (FI), 32–33 (DN), Lys-39, Lys-54, 76–80 (EGACS), and Asn-93 contribute to the NADP(+) site. The active-site Proton acceptor is the Tyr-140. Residue Lys-144 coordinates NADP(+). Substrate is bound at residue Asn-170. Residues Val-171 and Lys-179 each coordinate NADP(+). Lys-179 acts as the Proton acceptor in catalysis. Substrate is bound by residues Arg-181, His-188, 202-205 (FEGS), Arg-215, and Tyr-294.

This sequence belongs to the NAD(P)-dependent epimerase/dehydratase family. HldD subfamily. In terms of assembly, homopentamer. NADP(+) serves as cofactor.

The catalysed reaction is ADP-D-glycero-beta-D-manno-heptose = ADP-L-glycero-beta-D-manno-heptose. It participates in nucleotide-sugar biosynthesis; ADP-L-glycero-beta-D-manno-heptose biosynthesis; ADP-L-glycero-beta-D-manno-heptose from D-glycero-beta-D-manno-heptose 7-phosphate: step 4/4. Functionally, catalyzes the interconversion between ADP-D-glycero-beta-D-manno-heptose and ADP-L-glycero-beta-D-manno-heptose via an epimerization at carbon 6 of the heptose. The sequence is that of ADP-L-glycero-D-manno-heptose-6-epimerase from Dechloromonas aromatica (strain RCB).